We begin with the raw amino-acid sequence, 184 residues long: C-phycoerythrin beta chain (184 aa).

2 residues coordinate (2R,3E)-phycoerythrobilin: Cys48 and Cys59. The residue at position 70 (Asn70) is an N4-methylasparagine. Cys80 and Cys165 together coordinate (2R,3E)-phycoerythrobilin.

This sequence belongs to the phycobiliprotein family. In terms of assembly, heterodimer of an alpha and a beta chain. Post-translationally, contains three covalently linked bilin chromophores.

It localises to the cellular thylakoid membrane. Light-harvesting photosynthetic bile pigment-protein from the phycobiliprotein complex. This is C-phycoerythrin beta chain (cpeB) from Microchaete diplosiphon (Fremyella diplosiphon).